A 164-amino-acid polypeptide reads, in one-letter code: Diphosphoinositol polyphosphate phosphohydrolase 3-beta (164 aa).

Residues R9, 17–19, and 38–40 contribute to the substrate site; these read KKR and SSR. A Nudix hydrolase domain is found at 17 to 144; that stretch reads KKRAACLCFR…VHAEYLQKLK (128 aa). Mg(2+) is bound by residues G49 and E65. The short motif at 50–71 is the Nudix box element; that stretch reads GGMEPEEEPGGAAVREVFEEAG. E68 functions as the Proton acceptor in the catalytic mechanism. E69 contributes to the Mg(2+) binding site. Residues 89-91, R115, and K133 contribute to the substrate site; that span reads RKH. Residues 144–164 form a disordered region; sequence KLGGSPTNGNSVAPSPPEGDP.

This sequence belongs to the Nudix hydrolase family. DIPP subfamily. It depends on Mg(2+) as a cofactor. Mn(2+) is required as a cofactor.

It localises to the cytoplasm. It catalyses the reaction diphospho-myo-inositol polyphosphate + H2O = myo-inositol polyphosphate + phosphate.. It carries out the reaction P(1),P(6)-bis(5'-adenosyl) hexaphosphate + H2O = adenosine 5'-pentaphosphate + AMP + 2 H(+). The catalysed reaction is P(1),P(5)-bis(5'-adenosyl) pentaphosphate + H2O = adenosine 5'-tetraphosphate + AMP + 2 H(+). In terms of biological role, cleaves a beta-phosphate from the diphosphate groups in PP-InsP5 (diphosphoinositol pentakisphosphate), suggesting that it may play a role in signal transduction. Also able to catalyze the hydrolysis of dinucleoside oligophosphates, with Ap6A and Ap5A being the preferred substrates. The major reaction products are ADP and p4a from Ap6A and ADP and ATP from Ap5A. Also able to hydrolyze 5-phosphoribose 1-diphosphate. This is Diphosphoinositol polyphosphate phosphohydrolase 3-beta from Bos taurus (Bovine).